The sequence spans 842 residues: Taste receptor type 1 member 1 (842 aa).

The N-terminal stretch at methionine 1–cysteine 19 is a signal peptide. Topologically, residues tryptophan 20–serine 568 are extracellular. Asparagine 88, asparagine 89, asparagine 96, asparagine 136, asparagine 292, asparagine 480, and asparagine 530 each carry an N-linked (GlcNAc...) asparagine glycan. Residues leucine 569–phenylalanine 589 form a helical membrane-spanning segment. At alanine 590–arginine 604 the chain is on the cytoplasmic side. A helical membrane pass occupies residues leucine 605–glycine 625. Topologically, residues lysine 626–serine 640 are extracellular. A helical membrane pass occupies residues leucine 641–phenylalanine 661. Residues lysine 662–glycine 681 are Cytoplasmic-facing. A helical membrane pass occupies residues isoleucine 682–tryptophan 702. The Extracellular segment spans residues threonine 703–asparagine 725. Residues serine 726–cysteine 746 traverse the membrane as a helical segment. Topologically, residues serine 747 to cysteine 762 are cytoplasmic. Residues valine 763–isoleucine 783 traverse the membrane as a helical segment. The Extracellular portion of the chain corresponds to tyrosine 784–leucine 789. Residues proline 790–leucine 810 form a helical membrane-spanning segment. Residues proline 811 to threonine 842 are Cytoplasmic-facing.

Belongs to the G-protein coupled receptor 3 family. TAS1R subfamily. In terms of assembly, forms heterodimers with TAS1R3. Expressed strongly only in fungiform papillae.

It localises to the cell membrane. In terms of biological role, putative taste receptor. TAS1R1/TAS1R3 responds to the umami taste stimulus (the taste of monosodium glutamate) and also to most of the 20 standard L-amino acids, but not to their D-enantiomers or other compounds. Sequence differences within and between species can significantly influence the selectivity and specificity of taste responses. This is Taste receptor type 1 member 1 (Tas1r1) from Mus musculus (Mouse).